The primary structure comprises 978 residues: Sensor histidine kinase TodS (978 aa).

The PAS 1 domain occupies cysteine 32–serine 103. The region spanning valine 108–leucine 162 is the PAC 1 domain. A Histidine kinase 1 domain is found at lysine 187–alanine 405. Histidine 190 is subject to Phosphohistidine; by autocatalysis. Residues arginine 452–valine 567 enclose the Response regulatory domain. Aspartate 500 is modified (4-aspartylphosphate). The 71-residue stretch at serine 611–glycine 681 folds into the PAS 2 domain. The 53-residue stretch at tyrosine 685–glutamine 737 folds into the PAC 2 domain. Residues tyrosine 757–glutamine 974 form the Histidine kinase 2 domain. Histidine 760 carries the post-translational modification Phosphohistidine.

In terms of processing, autophosphorylated. Activation requires a sequential transfer of a phosphate group from a His in the primary transmitter domain, to an Asp in the receiver domain and to a His in the secondary transmitter domain.

It is found in the cytoplasm. It carries out the reaction ATP + protein L-histidine = ADP + protein N-phospho-L-histidine.. Its activity is regulated as follows. Activity is regulated by agonists and antagonists. Binding of agonists such as toluene or benzene to TodS stimulates autophosphorylation at His-190. Activity is inhibited by antagonists such as o-xylene, o-chlorotoluene and trimethylbenzene isomers, which bind to TodS but do not stimulate autophosphorylation. Agonists and antagonists bind to the same PAS domain. Member of the two-component regulatory system TodS/TodT involved in the regulation of toluene degradation. Phosphorylates TodT via a four-step phosphorelay in response to toluene. Can also be induced by benzene and ethylbenzene. The sequence is that of Sensor histidine kinase TodS (todS) from Pseudomonas putida (strain DOT-T1E).